We begin with the raw amino-acid sequence, 343 residues long: Small ribosomal subunit biogenesis GTPase RsgA (343 aa).

The region spanning R116–F275 is the CP-type G domain. GTP-binding positions include N163–D166 and G217–S225. The Zn(2+) site is built by C299, C304, H306, and C312.

This sequence belongs to the TRAFAC class YlqF/YawG GTPase family. RsgA subfamily. Monomer. Associates with 30S ribosomal subunit, binds 16S rRNA. Requires Zn(2+) as cofactor.

The protein resides in the cytoplasm. One of several proteins that assist in the late maturation steps of the functional core of the 30S ribosomal subunit. Helps release RbfA from mature subunits. May play a role in the assembly of ribosomal proteins into the subunit. Circularly permuted GTPase that catalyzes slow GTP hydrolysis, GTPase activity is stimulated by the 30S ribosomal subunit. The chain is Small ribosomal subunit biogenesis GTPase RsgA from Pseudomonas syringae pv. syringae (strain B728a).